A 223-amino-acid chain; its full sequence is Glycoprotein 42 (223 aa).

Over 1-8 (MVSFKQVR) the chain is Intravirion. Residues 9–29 (VPLFTAIALVIVLLLAYFLPP) form a helical membrane-spanning segment. Residues 30-223 (RVRGGGRVAA…CLCVSQRSNS (194 aa)) are Virion surface-facing. Intrachain disulfides connect C99–C138, C102–C115, C128–C214, C132–C216, and C192–C208. In terms of domain architecture, C-type lectin spans 111–217 (YKGCCFYFTK…CSFLKPCLCV (107 aa)).

It belongs to the epstein barr virus gp42 family. In terms of assembly, forms a complex with gp25 and gp85 via its N-terminus; this complex is used for invasion of B-lymphocytes. Interacts with human HLA-DRA and HLA-DRB1.

It localises to the virion membrane. The protein localises to the host membrane. Plays a role in virion attachment to host B-lymphocytes, through binding to leukocyte antigen (HLA) class II and subsequently participates in fusion of the virion with host membranes. May act as a tropism switch that directs fusion with B-lymphocytes and inhibits fusion with epithelial cells. Additionally, hampers T-cell recognition via HLA class II molecules through steric hindrance of T-cell receptor-class II-peptide interaction. In terms of biological role, soluble gp42 inhibits HLA class II-restricted antigen presentation to T-cells through binding to immature and mature HLA class II complexes. The polypeptide is Glycoprotein 42 (Epstein-Barr virus (strain B95-8) (HHV-4)).